Here is an 873-residue protein sequence, read N- to C-terminus: MRFGWLEVAALTAASVANAQVFDDSHGNNQELAFSPPFYPSPWADGQGEWADAHRRAVEIVSQMTLAEKVNLTTGTGWEMDRCVGQTGSVPRLGINWGLCGQDSPLGIRFSDLNSAFPAGTNVAATWDKTLAYLRGKAMGEEFNDKGVDILLGPAAGPLGKYPDGGRIWEGFSPDPALTGVLFAETIRGIQDAGVIATAKHYIMNEQEHFRQVSEAQGYGYNITETLSSNVDDKTMHELYLWPFADAVRAGVGAVMCSYNQINNSYGCQNSQTLNKLLKAELGFQGFVMSDWSAHHSGVGSALAGLDMSMPGDISFDDGLSFWGTNLTVSVLNGTVPAWRVDDMAVRIMTAYYKVGRDRLRIPPNFSSWTRDEYGWEHFAVSEGAWTKVNDFVNVQRSHSQIIREIGAASTVLLKNKGALPLTGKEVKVGVLGEDAGSNPWGANGCPDRGCDNGTLAMAWGSGTANFPYLVTPEQAIQREVISNGGNVFAVTDNGALSQMADVASQSSVSLVFVNADSGEGYINVDGNEGDRKNLTLWKNGEAVIDTVVSHCNNTIVVIHSVGPVLIDRWYDNPNVTAIIWAGLPGQESGNSLVDVLYGRVNPSAKTPFTWGKTRKSYGAPLLSEPNNGNGAPQDDFNEGVFIDYRHFDKRNETPIYEFGHGLSYTTFGYSHLRVQALNSSSSAYVPTSGETKPAPTYGEIGSAADYLYPEGLKRITKFIYPLLNSTDLEDSSDDPNYGWEDSEYIPEGARDGSPQPLLKAGGAPGGNPTLYQDLVRVSATITNTGNVAGYEVPQLYVSLGGPNEPRVVLRKFDRIFLAPGEQKVWTTTLNRRDLANWDVEAQDWVITKHPKKVHVGSSSRKLPLRAPLPRVY.

The signal sequence occupies residues 1 to 19 (MRFGWLEVAALTAASVANA). 3 N-linked (GlcNAc...) asparagine glycosylation sites follow: Asn-71, Asn-222, and Asn-263. The active site involves Asp-291. N-linked (GlcNAc...) asparagine glycans are attached at residues Asn-326, Asn-333, Asn-365, Asn-453, Asn-534, Asn-553, Asn-575, Asn-679, and Asn-725. The tract at residues 730–765 (EDSSDDPNYGWEDSEYIPEGARDGSPQPLLKAGGAP) is disordered.

It belongs to the glycosyl hydrolase 3 family.

It localises to the secreted. The catalysed reaction is Hydrolysis of terminal, non-reducing beta-D-glucosyl residues with release of beta-D-glucose.. The protein operates within glycan metabolism; cellulose degradation. Functionally, beta-glucosidases are one of a number of cellulolytic enzymes involved in the degradation of cellulosic biomass. Catalyzes the last step releasing glucose from the inhibitory cellobiose. This chain is Probable beta-glucosidase A (bglA), found in Neosartorya fischeri (strain ATCC 1020 / DSM 3700 / CBS 544.65 / FGSC A1164 / JCM 1740 / NRRL 181 / WB 181) (Aspergillus fischerianus).